Reading from the N-terminus, the 1124-residue chain is Sodium/hydrogen exchanger 11 (1124 aa).

Transmembrane regions (helical) follow at residues 25-45 (LVEEKHFTTLVCFIVVLGGLL), 52-72 (CEVIVLTILSLSGFVIGHMAY), 90-110 (FSLYSYFSPLIIFMVALDVEF), 120-140 (VLLTGLISFSTASIIIGYVVI), 179-199 (IYIDLIRGESLIICSIASIFF), 224-244 (DILGSIIFGYWCAKIIQCILA), 254-274 (IILCFSMVYMTFYIVEFLGMS), 305-325 (IFSSVYEHLIYAFFGIVIGCG), 335-355 (IPFIFILFTTVNLVRLLTILL), 372-392 (GVVITWSGIKGVFNLLWAPDV), and 405-425 (MFILYVQVISLLTMGINSYVM). 2 N-linked (GlcNAc...) asparagine glycosylation sites follow: Asn-447 and Asn-473. 4 helical membrane passes run 612–632 (TGQIINLIYIYPMIIHLWPMA), 641–661 (ISINYYFMFLYVLESTLKIII), 674–694 (LEFFILVIGIIDIFCVYFVKL), and 706–726 (VIMGYLRIIRFLPLFKIIVPI). An ion transport-like region spans residues 642–723 (SINYYFMFLY…IRFLPLFKII (82 aa)). 867–999 (IWLEGKDVLI…EYKIWLKLAL (133 aa)) contacts a nucleoside 3',5'-cyclic phosphate.

Belongs to the monovalent cation:proton antiporter 1 (CPA1) transporter (TC 2.A.36) family.

The protein resides in the membrane. In terms of biological role, involved in pH regulation. This is Sodium/hydrogen exchanger 11 (SLC9C2) from Homo sapiens (Human).